The primary structure comprises 161 residues: uncharacterized protein (161 aa).

The or 21 signal peptide spans 1–23 (MKKFAFLTALFAACYLPNAYAHA). A helical membrane pass occupies residues 129–149 (IYLHDILGGIGYIVGIAGLIA).

It is found in the membrane. This is an uncharacterized protein from Haemophilus influenzae (strain ATCC 51907 / DSM 11121 / KW20 / Rd).